A 258-amino-acid polypeptide reads, in one-letter code: UPF0758 protein BamMC406_2419 (258 aa).

The tract at residues 13–42 (CRDPADAPAAPARHTGPARPRKRRPRNWKP) is disordered. The span at 31 to 42 (RPRKRRPRNWKP) shows a compositional bias: basic residues. The region spanning 136–258 (QIDSPGAVED…TFSFARAGWL (123 aa)) is the MPN domain. 3 residues coordinate Zn(2+): His207, His209, and Asp220. Positions 207–220 (HNHPSGAVQPSAED) match the JAMM motif motif.

Belongs to the UPF0758 family.

The sequence is that of UPF0758 protein BamMC406_2419 from Burkholderia ambifaria (strain MC40-6).